The following is a 340-amino-acid chain: MGEMEQLRQEAEQLKKQIADARKACADTTLAELVSGLEVVGRVQMRTRRTLRGHLAKIYAMHWATDSKLLVSASQDGKLIVWDTYTTNKVHAIPLRSSWVMTCAYAPSGNFVACGGLDNMCSIYSLKSREGNVKVSRELSAHTGYLSCCRFLDDNNIVTSSGDTTCALWDIETGQQKTVFVGHTGDCMSLAVSPDFKLFISGACDASAKLWDVREGTCRQTFTGHESDINAICFFPNGEAICTGSDDASCRLFDLRADQELTAYSDESIICGITSVAFSLSGRLLFAGYDDFNCNIWDSMKGERVGILSGHDNRVSCLGVTADGMAVATGSWDSFLKVWN.

WD repeat units follow at residues G53–D83, L95–S125, A141–D170, G182–D212, G224–D254, S268–D298, and G310–N340.

This sequence belongs to the WD repeat G protein beta family. In terms of assembly, g proteins are composed of 3 units, alpha, beta and gamma. Interacts with RASD2.

The protein resides in the cytoplasm. Its subcellular location is the perinuclear region. In terms of biological role, guanine nucleotide-binding proteins (G proteins) are involved as a modulator or transducer in various transmembrane signaling systems. The beta and gamma chains are required for the GTPase activity, for replacement of GDP by GTP, and for G protein-effector interaction. The polypeptide is Guanine nucleotide-binding protein G(I)/G(S)/G(T) subunit beta-3 (GNB3) (Canis lupus familiaris (Dog)).